The chain runs to 839 residues: MTMVETNIKTMSVFANPTPTLSREDIADAVRRAEQRIAPLWPLRNFVAVNPYLGLIDHSFAQAAHVLACRAGARMTLPRSFYAQAIACGRITDDDLAAALAEGIPFRNAPETVAALKAFARDNAPEPVGNVLPTVADLAAKVTGSNWSTIVTDSISNWAGAYFDQGQSYWRSPWAKLPAYEAWRAEAAFDRTPLVRGARAFHRVLRAMPGTAAETIAVAIEQLQVPATGLEAYLHRLLLSIHGWASYARYLRWEAELYGGHDKTLTDLLAIRLVWEVALWQSFARDGVAAAWERSIDEMRHGQDDDEYKRVLGGDLLLQRAFEYAYRRQLFAQLGVAAPGTPVTRKRVQAAFCIDVRSEIFRRALETVSGEIETIGFAGFFGFPIEYIPLAEVEGGAQCPVLLTPQFVITESVDGATPSEVEAAITKRAMRQRVAKAWRMFKFAPVSCFGFVGPVGLAYVRKLLLDTLGITRPVPHPATFGLDGQTRARVKPSLEPRPFNGRLIGMSLPQRIAAAAGALKAMSLTDNFARIVLLAGHGSTTVNNPHATGLDCGACGGHTGEANVRVAVQILNDPAVRAGLREHGIVIPSDTVFVAGLHDTTTDDVTIFDKGDIPASHADDLQRLERDLVAAGRLARAERAALLNVDRNTDIDRAVRRRSTDWSQVRPEWGLAGCAAFIAAPRERTAGISLDGRAFLHNYNWRQDGDFSVLELIMTAPMIVASWINLQYFGSTVDNRVFGSGNKTLHNVVGTLGVLEGNGGDLRVGLPWQSVHDGKRYVHEPIRLHVLIEAPIEAMTAIITKHEQVQQLLDNDWLYLFAIGENGKVTHRYTGGLRWETCA.

Zn(2+) is bound by residues cysteine 353, aspartate 355, histidine 537, and cysteine 552.

Belongs to the inorganic carbon transporter (TC 9.A.2) DabA family. In terms of assembly, forms a complex with DabB. Requires Zn(2+) as cofactor.

The protein localises to the cell membrane. Part of an energy-coupled inorganic carbon pump. This is Probable inorganic carbon transporter subunit DabA from Chloroflexus aggregans (strain MD-66 / DSM 9485).